A 78-amino-acid chain; its full sequence is Major outer membrane lipoprotein Lpp (78 aa).

The signal sequence occupies residues 1 to 19 (MKAKIVLGAVILASGLLAG). The N-palmitoyl cysteine moiety is linked to residue Cys20. The S-diacylglycerol cysteine moiety is linked to residue Cys20. 2 repeats span residues 25-35 (NAQLDQISSDV) and 39-49 (NTQVQQLSSDV). Positions 28 to 62 (LDQISSDVNRLNTQVQQLSSDVQSANAQAKAAYEA) form a coiled coil. N6-murein peptidoglycan lysine is present on Lys78.

The protein belongs to the Lpp family. In terms of assembly, homotrimer.

Its subcellular location is the cell outer membrane. The protein resides in the secreted. It is found in the cell wall. Functionally, a highly abundant outer membrane lipoprotein that controls the distance between the inner and outer membranes. The only protein known to be covalently linked to the peptidoglycan network (PGN). Also non-covalently binds the PGN. The link between the cell outer membrane and PGN contributes to maintenance of the structural and functional integrity of the cell envelope, and maintains the correct distance between the PGN and the outer membrane. This chain is Major outer membrane lipoprotein Lpp, found in Proteus mirabilis.